A 102-amino-acid chain; its full sequence is Head completion protein gp15 (102 aa).

Belongs to the Caudoviricetes gp6/gp15 head completion protein family. Homododecamer. Interacts with the stopper protein gp16. Interacts with the portal protein; this interaction occurs at the end of the packaging when the terminase complex is replaced by the connector.

Its subcellular location is the virion. In terms of biological role, head completion protein that exhibits an open central channel for viral DNA ejection. Part of the head-tail connector by binding to the portal protein and to the head completion protein 16. This is Head completion protein gp15 from Bacillus phage SPP1 (Bacteriophage SPP1).